A 116-amino-acid polypeptide reads, in one-letter code: NADPH-dependent 7-cyano-7-deazaguanine reductase (116 aa).

C31 (thioimide intermediate) is an active-site residue. The active-site Proton donor is D38. Substrate is bound by residues 53 to 55 (IEL) and 72 to 73 (YE).

Belongs to the GTP cyclohydrolase I family. QueF type 1 subfamily.

It localises to the cytoplasm. It carries out the reaction 7-aminomethyl-7-carbaguanine + 2 NADP(+) = 7-cyano-7-deazaguanine + 2 NADPH + 3 H(+). It participates in tRNA modification; tRNA-queuosine biosynthesis. In terms of biological role, catalyzes the NADPH-dependent reduction of 7-cyano-7-deazaguanine (preQ0) to 7-aminomethyl-7-deazaguanine (preQ1). The protein is NADPH-dependent 7-cyano-7-deazaguanine reductase of Chlorobium luteolum (strain DSM 273 / BCRC 81028 / 2530) (Pelodictyon luteolum).